The sequence spans 421 residues: BEN domain-containing protein 5 (421 aa).

Lys133 is modified (N6-acetyllysine). Positions 180-243 (RALYEELLRN…LNRRLQDVLL (64 aa)) form a coiled coil. A Glycyl lysine isopeptide (Lys-Gly) (interchain with G-Cter in SUMO2) cross-link involves residue Lys258. The region spanning 302-408 (GSGIWVDEEK…EKIMDINKSC (107 aa)) is the BEN domain.

Its function is as follows. Acts as a transcriptional repressor. This Homo sapiens (Human) protein is BEN domain-containing protein 5 (BEND5).